The sequence spans 243 residues: Probable transcriptional regulatory protein BDI_1233 (243 aa).

The protein belongs to the TACO1 family.

The protein localises to the cytoplasm. The polypeptide is Probable transcriptional regulatory protein BDI_1233 (Parabacteroides distasonis (strain ATCC 8503 / DSM 20701 / CIP 104284 / JCM 5825 / NCTC 11152)).